We begin with the raw amino-acid sequence, 119 residues long: Fluoride-specific ion channel FluC 1 (119 aa).

Transmembrane regions (helical) follow at residues 6-26 (VALV…IAVV), 31-51 (FPWG…AIVY), 66-86 (VVAT…GETI), and 91-111 (RLAA…VLVA).

This sequence belongs to the fluoride channel Fluc/FEX (TC 1.A.43) family.

The protein localises to the cell membrane. The enzyme catalyses fluoride(in) = fluoride(out). Its function is as follows. Fluoride-specific ion channel. Important for reducing fluoride concentration in the cell, thus reducing its toxicity. The protein is Fluoride-specific ion channel FluC 1 of Natronomonas pharaonis (strain ATCC 35678 / DSM 2160 / CIP 103997 / JCM 8858 / NBRC 14720 / NCIMB 2260 / Gabara) (Halobacterium pharaonis).